The primary structure comprises 110 residues: Large ribosomal subunit protein uL22 (110 aa).

The protein belongs to the universal ribosomal protein uL22 family. Part of the 50S ribosomal subunit.

In terms of biological role, this protein binds specifically to 23S rRNA; its binding is stimulated by other ribosomal proteins, e.g. L4, L17, and L20. It is important during the early stages of 50S assembly. It makes multiple contacts with different domains of the 23S rRNA in the assembled 50S subunit and ribosome. Functionally, the globular domain of the protein is located near the polypeptide exit tunnel on the outside of the subunit, while an extended beta-hairpin is found that lines the wall of the exit tunnel in the center of the 70S ribosome. The polypeptide is Large ribosomal subunit protein uL22 (Exiguobacterium sp. (strain ATCC BAA-1283 / AT1b)).